The following is a 191-amino-acid chain: Small ribosomal subunit protein eS7 (191 aa).

Methionine 1 carries the post-translational modification N-acetylmethionine.

Belongs to the eukaryotic ribosomal protein eS7 family.

This is Small ribosomal subunit protein eS7 (RPS7) from Brassica oleracea (Wild cabbage).